We begin with the raw amino-acid sequence, 494 residues long: 4-trimethylaminobutyraldehyde dehydrogenase (494 aa).

N-acetylserine is present on Ser2. Lys30 is subject to N6-acetyllysine; alternate. Lys30 carries the N6-succinyllysine; alternate modification. Lys59 carries the post-translational modification N6-succinyllysine. Residues Lys180 and 232–236 (GSVPT) contribute to the NAD(+) site. Glu254 serves as the catalytic Proton acceptor. Residue Cys288 is the Nucleophile of the active site. N6-acetyllysine is present on Lys298. N6-acetyllysine; alternate is present on Lys303. Lys303 is modified (N6-succinyllysine; alternate). Lys344 is subject to N6-acetyllysine. Glu391 contacts NAD(+).

The protein belongs to the aldehyde dehydrogenase family. In terms of assembly, homotetramer.

The protein localises to the cytoplasm. The protein resides in the cytosol. The catalysed reaction is 4-(trimethylamino)butanal + NAD(+) + H2O = 4-(trimethylamino)butanoate + NADH + 2 H(+). It catalyses the reaction an aldehyde + NAD(+) + H2O = a carboxylate + NADH + 2 H(+). It carries out the reaction 4-aminobutanal + NAD(+) + H2O = 4-aminobutanoate + NADH + 2 H(+). The enzyme catalyses formaldehyde + NAD(+) + H2O = formate + NADH + 2 H(+). The catalysed reaction is acetaldehyde + NAD(+) + H2O = acetate + NADH + 2 H(+). It catalyses the reaction imidazole-4-acetaldehyde + NAD(+) + H2O = imidazole-4-acetate + NADH + 2 H(+). It carries out the reaction acrolein + NAD(+) + H2O = acrylate + NADH + 2 H(+). The enzyme catalyses (5-hydroxyindol-3-yl)acetaldehyde + NAD(+) + H2O = (5-hydroxyindol-3-yl)acetate + NADH + 2 H(+). The catalysed reaction is 3,4-dihydroxyphenylacetaldehyde + NAD(+) + H2O = 3,4-dihydroxyphenylacetate + NADH + 2 H(+). It catalyses the reaction spermine monoaldehyde + NAD(+) + H2O = N-(2-carboxyethyl)spermidine + NADH + 2 H(+). It carries out the reaction propanal + NAD(+) + H2O = propanoate + NADH + 2 H(+). The enzyme catalyses butanal + NAD(+) + H2O = butanoate + NADH + 2 H(+). The catalysed reaction is pentanal + NAD(+) + H2O = pentanoate + NADH + 2 H(+). It catalyses the reaction hexanal + NAD(+) + H2O = hexanoate + NADH + 2 H(+). Its pathway is amine and polyamine biosynthesis; carnitine biosynthesis. In terms of biological role, converts gamma-trimethylaminobutyraldehyde into gamma-butyrobetaine with high efficiency (in vitro). Can catalyze the irreversible oxidation of a broad range of aldehydes to the corresponding acids in an NAD-dependent reaction, but with low efficiency. Catalyzes the oxidation of aldehydes arising from biogenic amines and polyamines. In Pongo abelii (Sumatran orangutan), this protein is 4-trimethylaminobutyraldehyde dehydrogenase (ALDH9A1).